The chain runs to 363 residues: NAD(P)H-quinone oxidoreductase subunit 1, chloroplastic (363 aa).

A run of 7 helical transmembrane segments spans residues 30–50 (FIPI…IVWL), 104–124 (IAVI…HLVL), 129–149 (IGVF…LMSG), 248–268 (YSGI…LVSS), 269–289 (LFVT…IFVF), 300–320 (VFEP…FLFI), and 336–356 (LLNL…LLTT).

This sequence belongs to the complex I subunit 1 family. NDH is composed of at least 16 different subunits, 5 of which are encoded in the nucleus.

It is found in the plastid. The protein resides in the chloroplast thylakoid membrane. It catalyses the reaction a plastoquinone + NADH + (n+1) H(+)(in) = a plastoquinol + NAD(+) + n H(+)(out). The enzyme catalyses a plastoquinone + NADPH + (n+1) H(+)(in) = a plastoquinol + NADP(+) + n H(+)(out). Functionally, NDH shuttles electrons from NAD(P)H:plastoquinone, via FMN and iron-sulfur (Fe-S) centers, to quinones in the photosynthetic chain and possibly in a chloroplast respiratory chain. The immediate electron acceptor for the enzyme in this species is believed to be plastoquinone. Couples the redox reaction to proton translocation, and thus conserves the redox energy in a proton gradient. The chain is NAD(P)H-quinone oxidoreductase subunit 1, chloroplastic from Morus indica (Mulberry).